The primary structure comprises 333 residues: Neuropeptides B/W receptor type 2 (333 aa).

The Extracellular portion of the chain corresponds to 1–45 (MQAAGHPEPLDSRGSFSLPTMGANVSQDNGTGHNATFSEPLPFLY). 3 N-linked (GlcNAc...) asparagine glycosylation sites follow: N24, N29, and N34. The chain crosses the membrane as a helical span at residues 46 to 69 (VLLPAVYSGICAVGLTGNTAVILV). The Cytoplasmic segment spans residues 70 to 80 (ILRAPKMKTVT). A helical membrane pass occupies residues 81 to 105 (NVFILNLAVADGLFTLVLPVNIAEH). Over 106-120 (LLQYWPFGELLCKLV) the chain is Extracellular. C117 and C197 are joined by a disulfide. A helical membrane pass occupies residues 121–140 (LAVDHYNIFSSIYFLAVMSV). Residues 141 to 165 (DRYLVVLATVRSRHMPWRTYRGAKV) are Cytoplasmic-facing. The chain crosses the membrane as a helical span at residues 166–185 (ASLCVWLGVTVLVLPFFSFA). Residues 186–211 (GVYSNELQVPSCGLSFPWPEQVWFKA) lie on the Extracellular side of the membrane. The helical transmembrane segment at 212–233 (SRVYTLVLGFVLPVCTICVLYT) threads the bilayer. The Cytoplasmic segment spans residues 234-257 (DLLRRLRAVRLRSGAKALGKARRK). A helical membrane pass occupies residues 258-282 (VTVLVLVVLAVCLLCWTPFHLASVV). Topologically, residues 283–292 (ALTTDLPQTP) are extracellular. Residues 293–307 (LVISMSYVITSLSYA) form a helical membrane-spanning segment. Topologically, residues 308–333 (NSCLNPFLYAFLDDNFRKNFRSILRC) are cytoplasmic.

This sequence belongs to the G-protein coupled receptor 1 family. In terms of tissue distribution, detected at high levels in caudate nucleus, hippocampus and amygdala; at moderate levels in the adult brain, thalamus, parietal cortex, pituitary gland, adrenal gland and lymph nodes.

It is found in the cell membrane. Functionally, interacts specifically with a number of opioid ligands. Receptor for neuropeptides B and W, which may be involved in neuroendocrine system regulation, food intake and the organization of other signals. The sequence is that of Neuropeptides B/W receptor type 2 (NPBWR2) from Homo sapiens (Human).